A 350-amino-acid polypeptide reads, in one-letter code: Arabinogalactan endo-beta-1,4-galactanase A (350 aa).

The N-terminal stretch at 1 to 17 (MILSSLLPLSLVTLTSA) is a signal peptide. Asn129 carries an N-linked (GlcNAc...) asparagine glycan. Residue Glu153 is the Proton donor of the active site. Residue Glu263 is the Nucleophile of the active site.

This sequence belongs to the glycosyl hydrolase 53 family.

The protein resides in the secreted. The catalysed reaction is The enzyme specifically hydrolyzes (1-&gt;4)-beta-D-galactosidic linkages in type I arabinogalactans.. Endogalactanase involved in the degradation of plant cell wall polysaccharides, and more particularly of hairy regions of pectin. This Emericella nidulans (strain FGSC A4 / ATCC 38163 / CBS 112.46 / NRRL 194 / M139) (Aspergillus nidulans) protein is Arabinogalactan endo-beta-1,4-galactanase A (galA).